We begin with the raw amino-acid sequence, 495 residues long: tRNA modification GTPase MnmE (495 aa).

(6S)-5-formyl-5,6,7,8-tetrahydrofolate is bound by residues arginine 28, glutamate 89, and lysine 128. In terms of domain architecture, TrmE-type G spans 223–417 (GVRIVLGGCP…LRAQTLHLLH (195 aa)). Asparagine 233 provides a ligand contact to K(+). GTP contacts are provided by residues 233-238 (NAGKSS), 252-258 (SSVPGTT), and 277-280 (DTAG). Serine 237 lines the Mg(2+) pocket. K(+)-binding residues include serine 252, valine 254, and threonine 257. A Mg(2+)-binding site is contributed by threonine 258. Residue lysine 495 coordinates (6S)-5-formyl-5,6,7,8-tetrahydrofolate.

It belongs to the TRAFAC class TrmE-Era-EngA-EngB-Septin-like GTPase superfamily. TrmE GTPase family. In terms of assembly, homodimer. Heterotetramer of two MnmE and two MnmG subunits. Requires K(+) as cofactor.

Its subcellular location is the cytoplasm. Its function is as follows. Exhibits a very high intrinsic GTPase hydrolysis rate. Involved in the addition of a carboxymethylaminomethyl (cmnm) group at the wobble position (U34) of certain tRNAs, forming tRNA-cmnm(5)s(2)U34. This is tRNA modification GTPase MnmE from Treponema pallidum (strain Nichols).